Reading from the N-terminus, the 940-residue chain is Chromatin assembly factor 1 subunit FSM (940 aa).

Disordered regions lie at residues 317–473, 638–682, and 919–940; these read NVDD…DPCT, VDSD…FFVP, and KTTQ…PSSQ. Polar residues predominate over residues 320–329; that stretch reads DSQLQKNTST. The stretch at 329–439 forms a coiled coil; that stretch reads TNEKDTQKAQ…LKKQLAIQKQ (111 aa). A compositionally biased stretch (basic and acidic residues) spans 330–429; sequence NEKDTQKAQK…QKRREKEAVQ (100 aa). Residues 430–440 are compositionally biased toward low complexity; the sequence is LKKQLAIQKQA. The segment covering 445–461 has biased composition (basic and acidic residues); sequence RFFKNKKDSEKLEKPGG. A compositionally biased stretch (acidic residues) spans 638-650; that stretch reads VDSDDEWEEEDPG.

It belongs to the CHAF1A family. Component of the chromatin assembly factor 1 (CAF-1) complex, composed of FSM (FAS1), FAS2 and MSI1. In terms of tissue distribution, in embryo, expressed in leaf primordia, coleoptile and radicle. In seedlings, expressed in cell division zone of roots, SAM and leaf primordia. Expressed in floral organ primordia.

Its subcellular location is the nucleus. Component of the chromatin assembly factor complex (CAF-1) involved in chromatin assembly following DNA replication and DNA repair. Required for several aspects of development, including apical meristem maintenance by regulating the durations of the S- and G2-phases of the cell cycle through its chromatin assembly activity. The sequence is that of Chromatin assembly factor 1 subunit FSM (FSM) from Oryza sativa subsp. japonica (Rice).